The following is a 454-amino-acid chain: UDP-N-acetylmuramate--L-alanine ligase (454 aa).

112-118 (GTHGKTT) lines the ATP pocket.

It belongs to the MurCDEF family.

The protein resides in the cytoplasm. The catalysed reaction is UDP-N-acetyl-alpha-D-muramate + L-alanine + ATP = UDP-N-acetyl-alpha-D-muramoyl-L-alanine + ADP + phosphate + H(+). The protein operates within cell wall biogenesis; peptidoglycan biosynthesis. Functionally, cell wall formation. This Nitratidesulfovibrio vulgaris (strain ATCC 29579 / DSM 644 / CCUG 34227 / NCIMB 8303 / VKM B-1760 / Hildenborough) (Desulfovibrio vulgaris) protein is UDP-N-acetylmuramate--L-alanine ligase.